Consider the following 372-residue polypeptide: MFNFEVISSCSNTEARTGIFHTPHGQVRTPRFMPVGTLATVKGISSQQLKSTGSEMILSNTFHLHLQPGEKLIKEAGGIHEFMNWDKPVLTDSGGYQVFSLAKLNNITNEGVEFKNPRDGSPVFLSPDKVMRIQMDLGSDIAMAFDHCPPHTATENDIQDSLNRTHLWLENCVETHKKSNQALFGIVQGGRYPKLREISAKFTSSFGLPGIAVGGVSVGESVEQIHNVINFVPKFLPKDKPRYLMGIGSLKEITLAIAKGFDLFDCVLPTRLGRHGTAFFNDERWNIRNARFKNDFSPIDKTCKCETCKSYSRAYLHHLVRNDEILGLTLISLHNIAHLLRFTNAISAAIKDNCFTIDFAPWKRSSIAHHTW.

The active-site Proton acceptor is the Asp-92. Substrate-binding positions include 92-96 (DSGGY), Asp-146, Gln-188, and Gly-215. Residues 246 to 252 (GIGSLKE) form an RNA binding region. Asp-265 (nucleophile) is an active-site residue. The segment at 270 to 274 (TRLGR) is RNA binding; important for wobble base 34 recognition. Zn(2+) contacts are provided by Cys-303, Cys-305, Cys-308, and His-334.

This sequence belongs to the queuine tRNA-ribosyltransferase family. In terms of assembly, homodimer. Within each dimer, one monomer is responsible for RNA recognition and catalysis, while the other monomer binds to the replacement base PreQ1. Zn(2+) serves as cofactor.

It carries out the reaction 7-aminomethyl-7-carbaguanine + guanosine(34) in tRNA = 7-aminomethyl-7-carbaguanosine(34) in tRNA + guanine. It participates in tRNA modification; tRNA-queuosine biosynthesis. Its function is as follows. Catalyzes the base-exchange of a guanine (G) residue with the queuine precursor 7-aminomethyl-7-deazaguanine (PreQ1) at position 34 (anticodon wobble position) in tRNAs with GU(N) anticodons (tRNA-Asp, -Asn, -His and -Tyr). Catalysis occurs through a double-displacement mechanism. The nucleophile active site attacks the C1' of nucleotide 34 to detach the guanine base from the RNA, forming a covalent enzyme-RNA intermediate. The proton acceptor active site deprotonates the incoming PreQ1, allowing a nucleophilic attack on the C1' of the ribose to form the product. After dissociation, two additional enzymatic reactions on the tRNA convert PreQ1 to queuine (Q), resulting in the hypermodified nucleoside queuosine (7-(((4,5-cis-dihydroxy-2-cyclopenten-1-yl)amino)methyl)-7-deazaguanosine). This Prochlorococcus marinus (strain MIT 9515) protein is Queuine tRNA-ribosyltransferase.